A 962-amino-acid polypeptide reads, in one-letter code: SH3 domain-binding protein 4 (962 aa).

The SH3 1 domain occupies 55 to 114 (GNAKEVIAIKDYCPNNFTTLKFSKGDHLYVLDTSGGEWWYAHNTTEMGYIPSSYVQPLNY). Phosphoserine is present on residues serine 131, serine 245, serine 250, serine 278, and serine 295. Positions 316–453 (TNIVCKLDSS…LEPCMYLAIV (138 aa)) constitute a ZU5 domain. Serine 636 is modified (phosphoserine). In terms of domain architecture, SH3 2 spans 653–723 (SSLKFGKLLK…HTKNVLVVGK (71 aa)).

As to quaternary structure, homodimer or homooligomer. Interacts with DNM2, EPS15, clathrin, the adapter protein complex 2/AP-2 and TFRC. Interacts with the Rag GTPases RRAGA, RRAGB, RRAGC and RRAGD; the interaction is most probably direct, preferentially occurs with their inactive GDP-bound form and is negatively regulated by amino acids. Phosphorylated upon EGF stimulation. Phosphorylation prevents interaction with DNM2.

It localises to the membrane. The protein localises to the clathrin-coated pit. Its subcellular location is the cytoplasmic vesicle. It is found in the clathrin-coated vesicle. The protein resides in the nucleus. Functionally, may function in transferrin receptor internalization at the plasma membrane through a cargo-specific control of clathrin-mediated endocytosis. Alternatively, may act as a negative regulator of the amino acid-induced TOR signaling by inhibiting the formation of active Rag GTPase complexes. Preferentially binds inactive Rag GTPase complexes and prevents their interaction with the mTORC1 complex inhibiting its relocalization to lysosomes and its activation. Thereby, may indirectly regulate cell growth, proliferation and autophagy. The sequence is that of SH3 domain-binding protein 4 (Sh3bp4) from Mus musculus (Mouse).